Reading from the N-terminus, the 467-residue chain is Cytochrome c-552 (467 aa).

An N-terminal signal peptide occupies residues 1–27; the sequence is MMKKMTGKSFALSALVAASFMAAGAMA. H87 provides a ligand contact to heme c. C115, C118, and K119 together coordinate heme. Heme c is bound by residues C153, C156, H157, C195, C198, and H199. Ca(2+) is bound by residues E201, Y202, K250, and Q252. Y202 contributes to the substrate binding site. H253 serves as a coordination point for substrate. The heme c site is built by H264, C271, C274, H275, H290, C303, C306, H307, and H382.

The protein belongs to the cytochrome c-552 family. Requires Ca(2+) as cofactor. It depends on heme c as a cofactor.

It is found in the periplasm. The enzyme catalyses 6 Fe(III)-[cytochrome c] + NH4(+) + 2 H2O = 6 Fe(II)-[cytochrome c] + nitrite + 8 H(+). The protein operates within nitrogen metabolism; nitrate reduction (assimilation). Its function is as follows. Catalyzes the reduction of nitrite to ammonia, consuming six electrons in the process. The polypeptide is Cytochrome c-552 (Shewanella sp. (strain MR-4)).